Here is a 198-residue protein sequence, read N- to C-terminus: Snake venom metalloproteinase BpirMP (198 aa).

Residues Thr-1 to Pro-197 form the Peptidase M12B domain. Glu-4 and Asp-88 together coordinate Ca(2+). 3 cysteine pairs are disulfide-bonded: Cys-112–Cys-192, Cys-152–Cys-176, and Cys-154–Cys-159. His-137 is a Zn(2+) binding site. Glu-138 is an active-site residue. Residues His-141 and His-147 each contribute to the Zn(2+) site. Positions 192 and 195 each coordinate Ca(2+).

Belongs to the venom metalloproteinase (M12B) family. P-I subfamily. In terms of assembly, monomer. Requires Zn(2+) as cofactor. In terms of tissue distribution, expressed by the venom gland.

The protein resides in the secreted. Inhibited by the chelating agents EDTA, EGTA and 1,10-phenanthroline. Is not inhibited by serine proteinase inhibitors aprotinin, leupeptin and benzamidine. Zinc metalloprotease that preferentially degrades Aalpha chain of fibrinogen (FGA) (at a dose of 5 ug, whereas at a dose of 10 ug, both FGA and FGB are completely degraded). Degrades fibrin gel in a dose-dependent manner, as well blood clots formed in vitro (thrombolytic activity). Induces hemorrhage (in the dorsal skin of mice), with an MHD of 50 ug. The basal membrane components collagen (all chains of type IV) (COL4A4), fibronectin (FN1), laminin and nidogen are all degraded by this toxin. In Bothrops pirajai (Piraja's lancehead), this protein is Snake venom metalloproteinase BpirMP.